Consider the following 489-residue polypeptide: Rhamnulokinase (489 aa).

Residue Ala13–Arg17 coordinates ATP. Cys68 and Cys222 form a disulfide bridge. Substrate is bound by residues Gly83 and His236–Thr238. The Proton acceptor role is filled by Asp237. Thr259 serves as a coordination point for ATP. Asn296 contributes to the substrate binding site. Residue Gln304 participates in ATP binding. The cysteines at positions 353 and 370 are disulfide-linked. Gly402 lines the ATP pocket. A disulfide bridge links Cys413 with Cys417.

The protein belongs to the rhamnulokinase family. As to quaternary structure, monomer. Requires Mg(2+) as cofactor.

It catalyses the reaction L-rhamnulose + ATP = L-rhamnulose 1-phosphate + ADP + H(+). It participates in carbohydrate degradation; L-rhamnose degradation; glycerone phosphate from L-rhamnose: step 2/3. Functionally, involved in the catabolism of L-rhamnose (6-deoxy-L-mannose). Catalyzes the transfer of the gamma-phosphate group from ATP to the 1-hydroxyl group of L-rhamnulose to yield L-rhamnulose 1-phosphate. This Escherichia coli O157:H7 protein is Rhamnulokinase.